We begin with the raw amino-acid sequence, 392 residues long: 8-amino-7-oxononanoate synthase (392 aa).

R26 contacts substrate. 112–113 (GF) provides a ligand contact to pyridoxal 5'-phosphate. A substrate-binding site is contributed by H137. Pyridoxal 5'-phosphate contacts are provided by S187, H215, and T241. K244 carries the post-translational modification N6-(pyridoxal phosphate)lysine. T357 is a binding site for substrate.

This sequence belongs to the class-II pyridoxal-phosphate-dependent aminotransferase family. BioF subfamily. As to quaternary structure, homodimer. The cofactor is pyridoxal 5'-phosphate.

The enzyme catalyses 6-carboxyhexanoyl-[ACP] + L-alanine + H(+) = (8S)-8-amino-7-oxononanoate + holo-[ACP] + CO2. It participates in cofactor biosynthesis; biotin biosynthesis. Its function is as follows. Catalyzes the decarboxylative condensation of pimeloyl-[acyl-carrier protein] and L-alanine to produce 8-amino-7-oxononanoate (AON), [acyl-carrier protein], and carbon dioxide. The protein is 8-amino-7-oxononanoate synthase of Photobacterium profundum (strain SS9).